Consider the following 192-residue polypeptide: Ras-like GTP-binding protein rhoA (192 aa).

Position 12–19 (12–19 (GDGACGKT)) interacts with GTP. The short motif at 34–42 (YVPTVFENY) is the Effector region element. Residues 59–63 (DTAGQ) and 117–120 (NKRD) each bind GTP. Residue cysteine 189 is modified to Cysteine methyl ester. Cysteine 189 carries S-geranylgeranyl cysteine lipidation. Residues 190 to 192 (MIL) constitute a propeptide, removed in mature form.

Belongs to the small GTPase superfamily. Rho family. In terms of assembly, may interact with unc-89 (via DN and PH domains). Interacts with bli-3 and memo-1. As to expression, in larvae and adults, enriched at the tip of the head where the anterior sensory organ is located and in the pharyngeal nerve ring (at protein level). In embryos, enriched at the boundaries of dorsal cells undergoing intercalation, ventral enclosure and elongation.

It localises to the cell membrane. Its subcellular location is the cytoplasm. The protein localises to the cytoskeleton. It is found in the cell cortex. GTP hydrolysis is stimulated by unc-89. Functionally, required for ventral migration of epidermal cells during ventral enclosure in the embryo and for cell elongation. Also required for ventral migration of P cells during larval development. Involved in asymmetric spindle positioning during anaphase and establishment of cell polarity during embryo development. In adults, involved in regulation of multiple processes including locomotion, pharyngeal pumping, fecundity, ovulation, defecation and body morphology. In body wall muscles, regulates organization of myosin thick filaments downstream of unc-89. Association with the oxidase bli-3 promotes ROS production and this interaction may be modulated by memo-1, in order to control the oxidative stress response and longevity. In Caenorhabditis elegans, this protein is Ras-like GTP-binding protein rhoA.